The following is a 124-amino-acid chain: Large ribosomal subunit protein bL12 (124 aa).

Belongs to the bacterial ribosomal protein bL12 family. As to quaternary structure, homodimer. Part of the ribosomal stalk of the 50S ribosomal subunit. Forms a multimeric L10(L12)X complex, where L10 forms an elongated spine to which 2 to 4 L12 dimers bind in a sequential fashion. Binds GTP-bound translation factors.

Its function is as follows. Forms part of the ribosomal stalk which helps the ribosome interact with GTP-bound translation factors. Is thus essential for accurate translation. This Burkholderia ambifaria (strain MC40-6) protein is Large ribosomal subunit protein bL12.